We begin with the raw amino-acid sequence, 547 residues long: Intercellular adhesion molecule 3 (547 aa).

A signal peptide spans 1–29; that stretch reads MATMVPSVLWPRACWTLLVCCLLTPGVQG. The Extracellular segment spans residues 30–485; it reads QEFLLRVEPQ…VMDIEAGSSH (456 aa). One can recognise an Ig-like C2-type 1 domain in the interval 46–103; sequence GGSLFVNCSTDCPSSEKIALETSLSKELVASGMGWAAFNLSNVTGNSRILCSVYCNGS. N-linked (GlcNAc...) asparagine glycosylation is found at Asn-52, Asn-84, Asn-87, Asn-101, Asn-110, and Asn-134. 2 cysteine pairs are disulfide-bonded: Cys-53–Cys-96 and Cys-57–Cys-100. One can recognise an Ig-like C2-type 2 domain in the interval 132–197; it reads GQNFTLRCQV…FSCRTELDMQ (66 aa). A disulfide bridge links Cys-139 with Cys-190. Residues Asn-206, Asn-264, Asn-295, Asn-308, Asn-320, Asn-363, Asn-389, Asn-453, and Asn-457 are each glycosylated (N-linked (GlcNAc...) asparagine). The 68-residue stretch at 234–301 folds into the Ig-like C2-type 3 domain; that stretch reads ETSWPVDCTL…IVCNVTLGGE (68 aa). Cys-241 and Cys-294 are oxidised to a cystine. Residues 329 to 382 enclose the Ig-like C2-type 4 domain; that stretch reads GSTVTVSCMAGARVQVTLDGVPAAAPGQPAQLQLNATESDDGRSFFCSATLEVD. A disulfide bridge connects residues Cys-336 and Cys-375. Positions 416–469 constitute an Ig-like C2-type 5 domain; the sequence is KTRHVLQCQARGNPYPELRCLKEGSSREVPVGIPFFVNVTHNGTYQCQASSSRG. Residues Cys-423 and Cys-462 are joined by a disulfide bond. Residues 486-510 traverse the membrane as a helical segment; the sequence is FVPVFVAVLLTLGVVTIVLALMYVF. Residues 511–547 are Cytoplasmic-facing; it reads REHQRSGSYHVREESTYLPLTSMQPTEAMGEEPSRAE.

This sequence belongs to the immunoglobulin superfamily. ICAM family. As to quaternary structure, interacts with moesin/MSN. In terms of processing, upon stimulation by a physiologic stimuli becomes rapidly and transiently phosphorylated on serine residues. Post-translationally, N-glycosylated; glycans consist of a mixture of tri- and tetra-antennary complex-type chains and high-mannose chains. As to expression, leukocytes.

It is found in the membrane. Its function is as follows. ICAM proteins are ligands for the leukocyte adhesion protein LFA-1 (integrin alpha-L/beta-2). ICAM3 is also a ligand for integrin alpha-D/beta-2. In association with integrin alpha-L/beta-2, contributes to apoptotic neutrophil phagocytosis by macrophages. In Homo sapiens (Human), this protein is Intercellular adhesion molecule 3 (ICAM3).